The primary structure comprises 206 residues: Twist-related protein 1 (206 aa).

Residues 1 to 18 show a composition bias toward low complexity; sequence MMQDVSSSPVSPADDSLS. The tract at residues 1–109 is disordered; it reads MMQDVSSSPV…GGGSPQSYEE (109 aa). Basic residues predominate over residues 34 to 43; it reads RGARKRRSSR. 2 stretches are compositionally biased toward gly residues: residues 48-65 and 78-103; these read GSAG…GGDE and SAGG…GGGS. In terms of domain architecture, bHLH spans 112-163; sequence TQRVMANVRERQRTQSLNEAFAALRKIIPTLPSDKLSKIQTLKLAARYIDFL. Residues 165–195 are sufficient for transactivation activity; the sequence is QVLQSDELDSKMASCSYVAHERLSYAFSVWR.

Efficient DNA binding requires dimerization with another bHLH protein. Homodimer or heterodimer with E proteins such as TCF3. ID1 binds preferentially to TCF3 but does not interact efficiently with TWIST1 so ID1 levels control the amount of TCF3 available to dimerize with TWIST1 and thus determine the type of dimer formed. As to expression, subset of mesodermal cells.

The protein resides in the nucleus. Its function is as follows. Acts as a transcriptional regulator. Inhibits myogenesis by sequestrating E proteins, inhibiting trans-activation by MEF2, and inhibiting DNA-binding by MYOD1 through physical interaction. This interaction probably involves the basic domains of both proteins. Also represses expression of pro-inflammatory cytokines such as TNFA and IL1B. Regulates cranial suture patterning and fusion. Activates transcription as a heterodimer with E proteins. Regulates gene expression differentially, depending on dimer composition. Homodimers induce expression of FGFR2 and POSTN while heterodimers repress FGFR2 and POSTN expression and induce THBS1 expression. Heterodimerization is also required for osteoblast differentiation. Represses the activity of the circadian transcriptional activator: NPAS2-BMAL1 heterodimer. The chain is Twist-related protein 1 (Twist1) from Mus musculus (Mouse).